The primary structure comprises 236 residues: 2-C-methyl-D-erythritol 4-phosphate cytidylyltransferase (236 aa).

This sequence belongs to the IspD/TarI cytidylyltransferase family. IspD subfamily. In terms of assembly, homodimer.

The catalysed reaction is 2-C-methyl-D-erythritol 4-phosphate + CTP + H(+) = 4-CDP-2-C-methyl-D-erythritol + diphosphate. It participates in isoprenoid biosynthesis; isopentenyl diphosphate biosynthesis via DXP pathway; isopentenyl diphosphate from 1-deoxy-D-xylulose 5-phosphate: step 2/6. Catalyzes the formation of 4-diphosphocytidyl-2-C-methyl-D-erythritol from CTP and 2-C-methyl-D-erythritol 4-phosphate (MEP). This chain is 2-C-methyl-D-erythritol 4-phosphate cytidylyltransferase, found in Escherichia coli O17:K52:H18 (strain UMN026 / ExPEC).